Consider the following 619-residue polypeptide: Leucine aminopeptidase 2 (619 aa).

Residues 141-143 (QCQ) and 273-278 (PYGGME) contribute to the a peptide site. His-302 is a binding site for Zn(2+). Glu-303 serves as the catalytic Proton acceptor. His-306 and Glu-325 together coordinate Zn(2+). Residue Tyr-390 is the Proton donor of the active site.

It belongs to the peptidase M1 family. It depends on Zn(2+) as a cofactor.

It localises to the cytoplasm. The protein resides in the nucleus. The catalysed reaction is an epoxide + H2O = an ethanediol. In terms of biological role, aminopeptidase that preferentially cleaves di- and tripeptides. Also has low epoxide hydrolase activity (in vitro). Can hydrolyze the epoxide leukotriene LTA(4) but it forms preferentially 5,6-dihydroxy-7,9,11,14-eicosatetraenoic acid rather than the cytokine leukotriene B(4) as the product compared to the homologous mammalian enzyme (in vitro). The polypeptide is Leucine aminopeptidase 2 (Coccidioides immitis (strain RS) (Valley fever fungus)).